A 256-amino-acid polypeptide reads, in one-letter code: UPF0246 protein Sbal_1048 (256 aa).

This sequence belongs to the UPF0246 family.

The protein is UPF0246 protein Sbal_1048 of Shewanella baltica (strain OS155 / ATCC BAA-1091).